We begin with the raw amino-acid sequence, 502 residues long: Medium/long-chain-fatty-acid--CoA ligase FadD17 (502 aa).

The protein belongs to the ATP-dependent AMP-binding enzyme family.

It catalyses the reaction a medium-chain fatty acid + ATP + CoA = a medium-chain fatty acyl-CoA + AMP + diphosphate. The catalysed reaction is a long-chain fatty acid + ATP + CoA = a long-chain fatty acyl-CoA + AMP + diphosphate. Its pathway is lipid metabolism; fatty acid biosynthesis. In terms of biological role, catalyzes the activation of medium/long-chain fatty acids as acyl-coenzyme A (acyl-CoA), which are then transferred to the multifunctional polyketide synthase (PKS) type III for further chain extension. The sequence is that of Medium/long-chain-fatty-acid--CoA ligase FadD17 (fadD17) from Mycobacterium bovis (strain ATCC BAA-935 / AF2122/97).